Reading from the N-terminus, the 82-residue chain is High-potential iron-sulfur protein (82 aa).

Cys-42, Cys-45, Cys-60, and Cys-74 together coordinate [4Fe-4S] cluster.

Belongs to the high-potential iron-sulfur protein (HiPIP) family. Homodimer.

It localises to the periplasm. Specific class of high-redox-potential 4Fe-4S ferredoxins. Functions in anaerobic electron transport in most purple and in some other photosynthetic bacteria and in at least one genus (Paracoccus) of halophilic, denitrifying bacteria. This Marichromatium purpuratum (Chromatium purpuratum) protein is High-potential iron-sulfur protein (hip).